Reading from the N-terminus, the 185-residue chain is Protein OPG161 (185 aa).

Residues 1–33 lie on the Intravirion side of the membrane; that stretch reads MMTPENDEEQTSVFSATVYGDKIQGKNKRKRVI. A helical transmembrane segment spans residues 34-56; it reads GLCIRISMVISLLSMITMSAFLI. The Virion surface portion of the chain corresponds to 57–185; sequence VRLNQCMSAN…RKYFCVKTMN (129 aa). Residues 98-185 are C-type lectin-like domain; sequence ESCNGLYYQG…RKYFCVKTMN (88 aa). N-linked (GlcNAc...) asparagine; by host glycans are attached at residues Asn-125 and Asn-135.

It belongs to the orthopoxvirus OPG161 family. In terms of assembly, homodimer, disulfide-linked. Interacts with protein OPG190. Interacts (via C-terminus) with protein OPG164. Interacts with OPG162.

The protein resides in the virion membrane. The protein localises to the host membrane. In terms of biological role, forms a complex with OPG162 and OPG190 to coordinate the incorporation of OPG164 into wrapped enveloped virion (EV) membranes and, subsequently, the production of actin tails. Therefore plays an essential role in efficient cell-to-cell spread of viral particles. The protein is Protein OPG161 (OPG161) of Homo sapiens (Human).